We begin with the raw amino-acid sequence, 455 residues long: Bifunctional protein GlmU (455 aa).

The segment at 1-228 (MYKCALVLAA…YEETIGVNSR (228 aa)) is pyrophosphorylase. Residues 8–11 (LAAG), Lys-22, Gln-73, and 78–79 (GT) each bind UDP-N-acetyl-alpha-D-glucosamine. Asp-103 lines the Mg(2+) pocket. Residues Gly-140, Glu-154, Asn-169, and Asn-226 each coordinate UDP-N-acetyl-alpha-D-glucosamine. Asn-226 is a binding site for Mg(2+). The tract at residues 229–249 (VQLAEAEEILKNRINLMHMEN) is linker. The interval 250-455 (GVTLIDPRTT…GWVDKKGLKK (206 aa)) is N-acetyltransferase. UDP-N-acetyl-alpha-D-glucosamine-binding residues include Arg-331 and Lys-349. His-361 acts as the Proton acceptor in catalysis. 2 residues coordinate UDP-N-acetyl-alpha-D-glucosamine: Tyr-364 and Asn-375. Acetyl-CoA contacts are provided by residues 384–385 (NY), Ala-421, and Arg-438.

The protein in the N-terminal section; belongs to the N-acetylglucosamine-1-phosphate uridyltransferase family. This sequence in the C-terminal section; belongs to the transferase hexapeptide repeat family. As to quaternary structure, homotrimer. Mg(2+) serves as cofactor.

It localises to the cytoplasm. The catalysed reaction is alpha-D-glucosamine 1-phosphate + acetyl-CoA = N-acetyl-alpha-D-glucosamine 1-phosphate + CoA + H(+). It carries out the reaction N-acetyl-alpha-D-glucosamine 1-phosphate + UTP + H(+) = UDP-N-acetyl-alpha-D-glucosamine + diphosphate. It functions in the pathway nucleotide-sugar biosynthesis; UDP-N-acetyl-alpha-D-glucosamine biosynthesis; N-acetyl-alpha-D-glucosamine 1-phosphate from alpha-D-glucosamine 6-phosphate (route II): step 2/2. Its pathway is nucleotide-sugar biosynthesis; UDP-N-acetyl-alpha-D-glucosamine biosynthesis; UDP-N-acetyl-alpha-D-glucosamine from N-acetyl-alpha-D-glucosamine 1-phosphate: step 1/1. It participates in bacterial outer membrane biogenesis; LPS lipid A biosynthesis. Functionally, catalyzes the last two sequential reactions in the de novo biosynthetic pathway for UDP-N-acetylglucosamine (UDP-GlcNAc). The C-terminal domain catalyzes the transfer of acetyl group from acetyl coenzyme A to glucosamine-1-phosphate (GlcN-1-P) to produce N-acetylglucosamine-1-phosphate (GlcNAc-1-P), which is converted into UDP-GlcNAc by the transfer of uridine 5-monophosphate (from uridine 5-triphosphate), a reaction catalyzed by the N-terminal domain. The polypeptide is Bifunctional protein GlmU (Clostridium beijerinckii (strain ATCC 51743 / NCIMB 8052) (Clostridium acetobutylicum)).